A 264-amino-acid chain; its full sequence is 3-methyl-2-oxobutanoate hydroxymethyltransferase (264 aa).

Mg(2+) is bound by residues aspartate 45 and aspartate 84. Residues 45–46, aspartate 84, and lysine 112 each bind 3-methyl-2-oxobutanoate; that span reads DS. Glutamate 114 serves as a coordination point for Mg(2+). Glutamate 181 (proton acceptor) is an active-site residue.

It belongs to the PanB family. Homodecamer; pentamer of dimers. The cofactor is Mg(2+).

It localises to the cytoplasm. It carries out the reaction 3-methyl-2-oxobutanoate + (6R)-5,10-methylene-5,6,7,8-tetrahydrofolate + H2O = 2-dehydropantoate + (6S)-5,6,7,8-tetrahydrofolate. It functions in the pathway cofactor biosynthesis; (R)-pantothenate biosynthesis; (R)-pantoate from 3-methyl-2-oxobutanoate: step 1/2. Its function is as follows. Catalyzes the reversible reaction in which hydroxymethyl group from 5,10-methylenetetrahydrofolate is transferred onto alpha-ketoisovalerate to form ketopantoate. The protein is 3-methyl-2-oxobutanoate hydroxymethyltransferase of Shewanella pealeana (strain ATCC 700345 / ANG-SQ1).